We begin with the raw amino-acid sequence, 431 residues long: UDP-N-acetylglucosamine 1-carboxyvinyltransferase (431 aa).

Residue 22 to 23 coordinates phosphoenolpyruvate; the sequence is KN. Arg-102 contacts UDP-N-acetyl-alpha-D-glucosamine. The active-site Proton donor is Cys-126. Cys-126 bears the 2-(S-cysteinyl)pyruvic acid O-phosphothioketal mark. Asp-318 and Ile-340 together coordinate UDP-N-acetyl-alpha-D-glucosamine.

The protein belongs to the EPSP synthase family. MurA subfamily.

The protein localises to the cytoplasm. It carries out the reaction phosphoenolpyruvate + UDP-N-acetyl-alpha-D-glucosamine = UDP-N-acetyl-3-O-(1-carboxyvinyl)-alpha-D-glucosamine + phosphate. It participates in cell wall biogenesis; peptidoglycan biosynthesis. In terms of biological role, cell wall formation. Adds enolpyruvyl to UDP-N-acetylglucosamine. The chain is UDP-N-acetylglucosamine 1-carboxyvinyltransferase from Bartonella henselae (strain ATCC 49882 / DSM 28221 / CCUG 30454 / Houston 1) (Rochalimaea henselae).